The chain runs to 596 residues: Membrane protein insertase YidC (596 aa).

6 consecutive transmembrane segments (helical) span residues asparagine 4–aspartate 24, leucine 332–isoleucine 352, tyrosine 359–tyrosine 379, leucine 425–phenylalanine 445, isoleucine 468–leucine 488, and proline 518–valine 538. Residues lysine 565 to aspartate 584 show a composition bias toward basic and acidic residues. A disordered region spans residues lysine 565–lysine 596.

Belongs to the OXA1/ALB3/YidC family. Type 1 subfamily. In terms of assembly, interacts with the Sec translocase complex via SecD. Specifically interacts with transmembrane segments of nascent integral membrane proteins during membrane integration.

It localises to the cell inner membrane. Its function is as follows. Required for the insertion and/or proper folding and/or complex formation of integral membrane proteins into the membrane. Involved in integration of membrane proteins that insert both dependently and independently of the Sec translocase complex, as well as at least some lipoproteins. Aids folding of multispanning membrane proteins. The polypeptide is Membrane protein insertase YidC (Amoebophilus asiaticus (strain 5a2)).